The sequence spans 324 residues: Calpain-2 catalytic subunit (324 aa).

Residues 1–138 (YPNTFWMNPQ…KKADYQVVDD (138 aa)) are domain III. The linker stretch occupies residues 139-153 (EIEADLEENDASEDD). Residues 158–324 (FRRLFAQLAG…LISWLCFSVL (167 aa)) are domain IV. Residues Ala-166, Asp-169, Glu-171, Glu-176, Asp-209, Asp-211, Ser-213, Lys-215, Glu-220, Asp-239, Asp-241, Ser-243, Thr-245, Glu-250, Asp-282, and Asn-285 each contribute to the Ca(2+) site. EF-hand domains lie at 190–224 (DIKS…FYIL) and 226–261 (TKIQ…AGFK).

It belongs to the peptidase C2 family. Forms a heterodimer with a small (regulatory) subunit (CAPNS1). Interacts with CPEB3; this leads to cleavage of CPEB3. Ca(2+) is required as a cofactor. Ubiquitous.

The protein localises to the cytoplasm. The protein resides in the cell membrane. It catalyses the reaction Broad endopeptidase specificity.. With respect to regulation, activated by 200-1000 micromolar concentrations of calcium and inhibited by calpastatin. Functionally, calcium-regulated non-lysosomal thiol-protease which catalyzes limited proteolysis of substrates involved in cytoskeletal remodeling and signal transduction. Proteolytically cleaves MYOC at 'Arg-226'. Proteolytically cleaves CPEB3 following neuronal stimulation which abolishes CPEB3 translational repressor activity, leading to translation of CPEB3 target mRNAs. The sequence is that of Calpain-2 catalytic subunit (CAPN2) from Sus scrofa (Pig).